The chain runs to 103 residues: Large ribosomal subunit protein bL21 (103 aa).

This sequence belongs to the bacterial ribosomal protein bL21 family. As to quaternary structure, part of the 50S ribosomal subunit. Contacts protein L20.

This protein binds to 23S rRNA in the presence of protein L20. The chain is Large ribosomal subunit protein bL21 from Actinobacillus succinogenes (strain ATCC 55618 / DSM 22257 / CCUG 43843 / 130Z).